Consider the following 344-residue polypeptide: Glycerol-3-phosphate dehydrogenase [NAD(P)+] (344 aa).

The NADPH site is built by serine 23, tryptophan 24, arginine 44, and lysine 118. 3 residues coordinate sn-glycerol 3-phosphate: lysine 118, glycine 147, and threonine 149. Alanine 151 is a binding site for NADPH. Residues lysine 202, aspartate 255, serine 265, arginine 266, and asparagine 267 each coordinate sn-glycerol 3-phosphate. Lysine 202 acts as the Proton acceptor in catalysis. Arginine 266 serves as a coordination point for NADPH. An NADPH-binding site is contributed by glutamate 292.

It belongs to the NAD-dependent glycerol-3-phosphate dehydrogenase family.

The protein resides in the cytoplasm. It catalyses the reaction sn-glycerol 3-phosphate + NAD(+) = dihydroxyacetone phosphate + NADH + H(+). The enzyme catalyses sn-glycerol 3-phosphate + NADP(+) = dihydroxyacetone phosphate + NADPH + H(+). It participates in membrane lipid metabolism; glycerophospholipid metabolism. Its function is as follows. Catalyzes the reduction of the glycolytic intermediate dihydroxyacetone phosphate (DHAP) to sn-glycerol 3-phosphate (G3P), the key precursor for phospholipid synthesis. The protein is Glycerol-3-phosphate dehydrogenase [NAD(P)+] of Nitrosococcus oceani (strain ATCC 19707 / BCRC 17464 / JCM 30415 / NCIMB 11848 / C-107).